A 127-amino-acid polypeptide reads, in one-letter code: Holo-[acyl-carrier-protein] synthase (127 aa).

Aspartate 8 and glutamate 60 together coordinate Mg(2+).

This sequence belongs to the P-Pant transferase superfamily. AcpS family. The cofactor is Mg(2+).

The protein localises to the cytoplasm. It carries out the reaction apo-[ACP] + CoA = holo-[ACP] + adenosine 3',5'-bisphosphate + H(+). Its function is as follows. Transfers the 4'-phosphopantetheine moiety from coenzyme A to a Ser of acyl-carrier-protein. This is Holo-[acyl-carrier-protein] synthase from Marinomonas sp. (strain MWYL1).